The chain runs to 231 residues: Small ribosomal subunit protein uS3 (231 aa).

One can recognise a KH type-2 domain in the interval 38–106; that stretch reads IRVYLKNRLK…KTFVNIMEIK (69 aa).

The protein belongs to the universal ribosomal protein uS3 family. In terms of assembly, part of the 30S ribosomal subunit. Forms a tight complex with proteins S10 and S14.

Binds the lower part of the 30S subunit head. Binds mRNA in the 70S ribosome, positioning it for translation. This is Small ribosomal subunit protein uS3 from Endomicrobium trichonymphae.